The primary structure comprises 494 residues: AAA-ATPase At2g18190 (494 aa).

A helical transmembrane segment spans residues 13–29; the sequence is SSLFTAYASLTGFLMLF. Position 251–258 (251–258) interacts with ATP; the sequence is GPPGTGKS. Over residues 459-470 the composition is skewed to basic and acidic residues; the sequence is TCRKLDGDDKHN. The segment at 459-494 is disordered; sequence TCRKLDGDDKHNVSSTNDLKKTKKKKKGGKGKAKGN. Residues 479–494 show a composition bias toward basic residues; that stretch reads KTKKKKKGGKGKAKGN.

Belongs to the AAA ATPase family. BCS1 subfamily. It depends on Mg(2+) as a cofactor.

The protein resides in the membrane. The enzyme catalyses ATP + H2O = ADP + phosphate + H(+). The sequence is that of AAA-ATPase At2g18190 from Arabidopsis thaliana (Mouse-ear cress).